Here is a 202-residue protein sequence, read N- to C-terminus: Imidazoleglycerol-phosphate dehydratase (202 aa).

It belongs to the imidazoleglycerol-phosphate dehydratase family.

The protein localises to the cytoplasm. It carries out the reaction D-erythro-1-(imidazol-4-yl)glycerol 3-phosphate = 3-(imidazol-4-yl)-2-oxopropyl phosphate + H2O. Its pathway is amino-acid biosynthesis; L-histidine biosynthesis; L-histidine from 5-phospho-alpha-D-ribose 1-diphosphate: step 6/9. The chain is Imidazoleglycerol-phosphate dehydratase from Parasynechococcus marenigrum (strain WH8102).